The chain runs to 31 residues: Acetyl-CoA carboxylase (31 aa).

The disordered stretch occupies residues 1–31; the sequence is RISSSVIAHKTQLDSGKREVYSSHMQLGGPK. A compositionally biased stretch (basic and acidic residues) spans 11 to 21; sequence TQLDSGKREVY.

The catalysed reaction is hydrogencarbonate + acetyl-CoA + ATP = malonyl-CoA + ADP + phosphate + H(+). It participates in lipid metabolism; malonyl-CoA biosynthesis; malonyl-CoA from acetyl-CoA: step 1/1. In Catharanthus roseus (Madagascar periwinkle), this protein is Acetyl-CoA carboxylase.